Here is a 263-residue protein sequence, read N- to C-terminus: Endonuclease 8 (263 aa).

The Schiff-base intermediate with DNA role is filled by Pro2. The Proton donor role is filled by Glu3. Lys53 functions as the Proton donor; for beta-elimination activity in the catalytic mechanism. Residues Gln70, Arg125, and Asn169 each contribute to the DNA site. An FPG-type zinc finger spans residues 229-263 (KVFHRDGEACERCGGIIEKTTLSSRPFYWCPHCQK). Residue Arg253 is the Proton donor; for delta-elimination activity of the active site.

The protein belongs to the FPG family. The cofactor is Zn(2+).

It catalyses the reaction 2'-deoxyribonucleotide-(2'-deoxyribose 5'-phosphate)-2'-deoxyribonucleotide-DNA = a 3'-end 2'-deoxyribonucleotide-(2,3-dehydro-2,3-deoxyribose 5'-phosphate)-DNA + a 5'-end 5'-phospho-2'-deoxyribonucleoside-DNA + H(+). In terms of biological role, involved in base excision repair of DNA damaged by oxidation or by mutagenic agents. Acts as a DNA glycosylase that recognizes and removes damaged bases. Has a preference for oxidized pyrimidines, such as thymine glycol, 5,6-dihydrouracil and 5,6-dihydrothymine. Has AP (apurinic/apyrimidinic) lyase activity and introduces nicks in the DNA strand. Cleaves the DNA backbone by beta-delta elimination to generate a single-strand break at the site of the removed base with both 3'- and 5'-phosphates. This Salmonella paratyphi A (strain AKU_12601) protein is Endonuclease 8.